The chain runs to 288 residues: Thymidylate synthase (288 aa).

Residues Arg21 and 150–151 (RR) contribute to the dUMP site. The active-site Nucleophile is the Cys170. DUMP-binding positions include 190-193 (RSGD), Asn201, and 231-233 (HIY). Asp193 contributes to the (6R)-5,10-methylene-5,6,7,8-tetrahydrofolate binding site. Ala287 serves as a coordination point for (6R)-5,10-methylene-5,6,7,8-tetrahydrofolate.

It belongs to the thymidylate synthase family. Bacterial-type ThyA subfamily. As to quaternary structure, homodimer.

Its subcellular location is the cytoplasm. It catalyses the reaction dUMP + (6R)-5,10-methylene-5,6,7,8-tetrahydrofolate = 7,8-dihydrofolate + dTMP. It participates in pyrimidine metabolism; dTTP biosynthesis. In terms of biological role, catalyzes the reductive methylation of 2'-deoxyuridine-5'-monophosphate (dUMP) to 2'-deoxythymidine-5'-monophosphate (dTMP) while utilizing 5,10-methylenetetrahydrofolate (mTHF) as the methyl donor and reductant in the reaction, yielding dihydrofolate (DHF) as a by-product. This enzymatic reaction provides an intracellular de novo source of dTMP, an essential precursor for DNA biosynthesis. The polypeptide is Thymidylate synthase (Acholeplasma laidlawii (strain PG-8A)).